Consider the following 179-residue polypeptide: Small ribosomal subunit protein uS7 (179 aa).

The protein belongs to the universal ribosomal protein uS7 family. In terms of assembly, part of the 30S ribosomal subunit. Contacts proteins S9 and S11.

Its function is as follows. One of the primary rRNA binding proteins, it binds directly to 16S rRNA where it nucleates assembly of the head domain of the 30S subunit. Is located at the subunit interface close to the decoding center, probably blocks exit of the E-site tRNA. The protein is Small ribosomal subunit protein uS7 of Shigella flexneri serotype 5b (strain 8401).